An 876-amino-acid chain; its full sequence is Leucine--tRNA ligase (876 aa).

The 'HIGH' region signature appears at 43 to 53 (PYPSGRIHIGH). A 'KMSKS' region motif is present at residues 632–636 (KMSKS). Lys635 contributes to the ATP binding site.

This sequence belongs to the class-I aminoacyl-tRNA synthetase family.

The protein localises to the cytoplasm. The enzyme catalyses tRNA(Leu) + L-leucine + ATP = L-leucyl-tRNA(Leu) + AMP + diphosphate. This chain is Leucine--tRNA ligase, found in Allorhizobium ampelinum (strain ATCC BAA-846 / DSM 112012 / S4) (Agrobacterium vitis (strain S4)).